Here is a 311-residue protein sequence, read N- to C-terminus: Small ribosomal subunit protein uS3 (311 aa).

In terms of domain architecture, KH type-2 spans 17 to 86 (MDEYFAEQLN…NPQIDAQEVK (70 aa)). Residues 190 to 267 (PDSYTTTEPS…EPQAEVAEDL (78 aa)) are disordered. The segment covering 194 to 204 (TTTEPSEPVTE) has biased composition (low complexity). Residues 205–231 (PVEKPAEKPAAKPAEKPVEAPKKESAA) show a composition bias toward basic and acidic residues. Residues 232–247 (KPKTPAVAPEKPVETA) show a composition bias toward low complexity. The span at 248 to 267 (EVAEPEEAEEEPQAEVAEDL) shows a compositional bias: acidic residues.

Belongs to the universal ribosomal protein uS3 family. Part of the 30S ribosomal subunit.

In terms of biological role, binds the lower part of the 30S subunit head. The sequence is that of Small ribosomal subunit protein uS3 from Methanosarcina barkeri (strain Fusaro / DSM 804).